The sequence spans 217 residues: Fucoxanthin-chlorophyll a-c binding protein B, chloroplastic (217 aa).

Residues 1–39 (MKSAVMAVACAAAPGFRGPSAFNGAALTTSAKACSAMKM) constitute a chloroplast transit peptide. A run of 3 helical transmembrane segments spans residues 81–101 (IAML…PGML), 122–142 (IPPA…LAVM), and 183–203 (GRAA…NNKP).

This sequence belongs to the fucoxanthin chlorophyll protein family. As to quaternary structure, the LHC complex of chromophytic algae is composed of fucoxanthin, chlorophyll A and C bound non-covalently by fucoxanthin chlorophyll proteins (FCPs). The ratio of pigments in this LHC is; fucoxanthin: chlorophyll C: chlorophyll A; (0.6-1): (0.1-0.3): (1).

It is found in the plastid. The protein localises to the chloroplast thylakoid membrane. Functionally, the light-harvesting complex (LHC) functions as a light receptor, it captures and delivers excitation energy to photosystems with which it is closely associated. Energy is transferred from the carotenoid and chlorophyll C (or B) to chlorophyll A and the photosynthetic reaction centers where it is used to synthesize ATP and reducing power. The polypeptide is Fucoxanthin-chlorophyll a-c binding protein B, chloroplastic (FCPB) (Macrocystis pyrifera (Giant kelp)).